Reading from the N-terminus, the 545-residue chain is Chaperonin GroEL 1 (545 aa).

Residues 30-33, Lys-51, 87-91, Gly-415, and Asp-495 each bind ATP; these read TLGP and DGTTT.

The protein belongs to the chaperonin (HSP60) family. In terms of assembly, forms a cylinder of 14 subunits composed of two heptameric rings stacked back-to-back. Interacts with the co-chaperonin GroES.

The protein localises to the cytoplasm. It catalyses the reaction ATP + H2O + a folded polypeptide = ADP + phosphate + an unfolded polypeptide.. Its function is as follows. Together with its co-chaperonin GroES, plays an essential role in assisting protein folding. The GroEL-GroES system forms a nano-cage that allows encapsulation of the non-native substrate proteins and provides a physical environment optimized to promote and accelerate protein folding. The protein is Chaperonin GroEL 1 of Rhizobium etli (strain ATCC 51251 / DSM 11541 / JCM 21823 / NBRC 15573 / CFN 42).